Reading from the N-terminus, the 311-residue chain is Malate dehydrogenase (311 aa).

NAD(+) is bound by residues 7-13 and aspartate 34; that span reads GAAGGIG. Arginine 81 and arginine 87 together coordinate substrate. NAD(+) contacts are provided by residues asparagine 94 and 117–119; that span reads ITN. Residues asparagine 119 and arginine 153 each contribute to the substrate site. Histidine 177 (proton acceptor) is an active-site residue. Residue methionine 227 participates in NAD(+) binding.

It belongs to the LDH/MDH superfamily. MDH type 1 family. As to quaternary structure, homodimer.

The catalysed reaction is (S)-malate + NAD(+) = oxaloacetate + NADH + H(+). Functionally, catalyzes the reversible oxidation of malate to oxaloacetate. The protein is Malate dehydrogenase of Shewanella pealeana (strain ATCC 700345 / ANG-SQ1).